The following is a 118-amino-acid chain: Non-specific lipid-transfer protein 5 (118 aa).

The first 25 residues, 1 to 25, serve as a signal peptide directing secretion; that stretch reads MEGLLKLSTLVIVCMLVTAPMASEA. Disulfide bonds link cysteine 29-cysteine 76, cysteine 39-cysteine 53, cysteine 54-cysteine 100, and cysteine 74-cysteine 114.

This sequence belongs to the plant LTP family.

In terms of biological role, plant non-specific lipid-transfer proteins transfer phospholipids as well as galactolipids across membranes. May play a role in wax or cutin deposition in the cell walls of expanding epidermal cells and certain secretory tissues. This is Non-specific lipid-transfer protein 5 (LTP5) from Arabidopsis thaliana (Mouse-ear cress).